The primary structure comprises 970 residues: uncharacterized protein (970 aa).

Positions 942 to 970 (QLSFEEDGWTESEPRPVRREAHVRAKERH) are disordered. A compositionally biased stretch (basic and acidic residues) spans 953 to 970 (SEPRPVRREAHVRAKERH).

This is an uncharacterized protein from Frog virus 3 (isolate Goorha) (FV-3).